The following is a 501-amino-acid chain: Cytochrome P450 90A4 (501 aa).

Residues alanine 2–leucine 22 form a helical membrane-spanning segment. Cysteine 446 is a heme binding site.

The protein belongs to the cytochrome P450 family. Heme serves as cofactor.

It localises to the membrane. The protein operates within plant hormone biosynthesis; brassinosteroid biosynthesis. Catalyzes the C23-alpha-hydroxylation step in brassinosteroid biosynthesis. Converts 6-deoxocathasterone to 6-deoxoteasterone in the late C6-oxidation pathway and cathasterone to teasterone (TE) in the early C6-oxidation pathway of brassinolide (BL) biosynthesis. The sequence is that of Cytochrome P450 90A4 from Oryza sativa subsp. indica (Rice).